The chain runs to 190 residues: MFKYYGVFNIPMYLTLFRIIMVPCFVAVFYWPIYWSPMLCTLIFFIAAITDWFDGFLARRWNQTSRIGGFLDPIADKIMIITALILISEHFHVWWMTLPISSIIIREILISSLRECIARVDNKNNISVIWLSKVKTFAQMLALIALLCRLNEWTVIMGVISLYTAMLLTLWSMCYYVYSVSSILLQYKLK.

Topologically, residues 6 to 17 are cytoplasmic; it reads GVFNIPMYLTLF. Residues 18-42 form a helical membrane-spanning segment; it reads RIIMVPCFVAVFYWPIYWSPMLCTL. Topologically, residues 43–65 are periplasmic; sequence IFFIAAITDWFDGFLARRWNQTS. Residues 66 to 86 traverse the membrane as a helical segment; it reads RIGGFLDPIADKIMIITALIL. The Cytoplasmic portion of the chain corresponds to 87–91; that stretch reads ISEHF. The helical transmembrane segment at 92–112 threads the bilayer; it reads HVWWMTLPISSIIIREILISS. The Periplasmic portion of the chain corresponds to 113-150; sequence LRECIARVDNKNNISVIWLSKVKTFAQMLALIALLCRL. A helical membrane pass occupies residues 151 to 173; sequence NEWTVIMGVISLYTAMLLTLWSM. Residues 174-186 lie on the Cytoplasmic side of the membrane; it reads CYYVYSVSSILLQ.

It belongs to the CDP-alcohol phosphatidyltransferase class-I family.

It localises to the cell inner membrane. It catalyses the reaction a CDP-1,2-diacyl-sn-glycerol + sn-glycerol 3-phosphate = a 1,2-diacyl-sn-glycero-3-phospho-(1'-sn-glycero-3'-phosphate) + CMP + H(+). The protein operates within phospholipid metabolism; phosphatidylglycerol biosynthesis; phosphatidylglycerol from CDP-diacylglycerol: step 1/2. Its function is as follows. Catalyzes the conversion of cytidine diphosphate diacylglycerol (CDP-DG) and glycerol 3-phosphate into phosphatidylglycerol. Essential for the synthesis of anionic phospholipids, thereby playing a role in balancing the ratio of zwitterionic and anionic phospholipids, which is thought to be important for normal membrane function. This chain is CDP-diacylglycerol--glycerol-3-phosphate 3-phosphatidyltransferase, found in Blochmanniella floridana.